A 1325-amino-acid polypeptide reads, in one-letter code: Clustered mitochondria protein homolog (1325 aa).

Residues Pro-311–Leu-573 enclose the Clu domain. 3 disordered regions span residues Lys-893–Thr-937, Asp-1032–Leu-1063, and Gln-1245–Ser-1325. Residues Ser-1265–His-1275 show a composition bias toward basic residues. Low complexity predominate over residues Gln-1276–Pro-1285. The segment covering Ala-1314 to Ser-1325 has biased composition (basic residues).

This sequence belongs to the CLU family. May associate with the eukaryotic translation initiation factor 3 (eIF-3) complex.

It localises to the cytoplasm. Its function is as follows. mRNA-binding protein involved in proper cytoplasmic distribution of mitochondria. This is Clustered mitochondria protein homolog from Malassezia globosa (strain ATCC MYA-4612 / CBS 7966) (Dandruff-associated fungus).